A 282-amino-acid polypeptide reads, in one-letter code: 2,3,4,5-tetrahydropyridine-2,6-dicarboxylate N-succinyltransferase (282 aa).

Substrate-binding residues include Arg109 and Asp146.

Belongs to the transferase hexapeptide repeat family. As to quaternary structure, homotrimer.

The protein resides in the cytoplasm. It catalyses the reaction (S)-2,3,4,5-tetrahydrodipicolinate + succinyl-CoA + H2O = (S)-2-succinylamino-6-oxoheptanedioate + CoA. Its pathway is amino-acid biosynthesis; L-lysine biosynthesis via DAP pathway; LL-2,6-diaminopimelate from (S)-tetrahydrodipicolinate (succinylase route): step 1/3. The chain is 2,3,4,5-tetrahydropyridine-2,6-dicarboxylate N-succinyltransferase from Bartonella quintana (strain Toulouse) (Rochalimaea quintana).